Reading from the N-terminus, the 167-residue chain is S-ribosylhomocysteine lyase (167 aa).

H54, H58, and C128 together coordinate Fe cation.

This sequence belongs to the LuxS family. Homodimer. Fe cation is required as a cofactor.

It carries out the reaction S-(5-deoxy-D-ribos-5-yl)-L-homocysteine = (S)-4,5-dihydroxypentane-2,3-dione + L-homocysteine. Its function is as follows. Involved in the synthesis of autoinducer 2 (AI-2) which is secreted by bacteria and is used to communicate both the cell density and the metabolic potential of the environment. The regulation of gene expression in response to changes in cell density is called quorum sensing. Catalyzes the transformation of S-ribosylhomocysteine (RHC) to homocysteine (HC) and 4,5-dihydroxy-2,3-pentadione (DPD). This chain is S-ribosylhomocysteine lyase, found in Sulfurimonas denitrificans (strain ATCC 33889 / DSM 1251) (Thiomicrospira denitrificans (strain ATCC 33889 / DSM 1251)).